Here is an 878-residue protein sequence, read N- to C-terminus: Phosphoenolpyruvate carboxylase (878 aa).

Residues H138 and K545 contribute to the active site.

The protein belongs to the PEPCase type 1 family. Mg(2+) is required as a cofactor.

The enzyme catalyses oxaloacetate + phosphate = phosphoenolpyruvate + hydrogencarbonate. Its function is as follows. Forms oxaloacetate, a four-carbon dicarboxylic acid source for the tricarboxylic acid cycle. The polypeptide is Phosphoenolpyruvate carboxylase (Shewanella sediminis (strain HAW-EB3)).